Here is a 662-residue protein sequence, read N- to C-terminus: Chaperone protein HtpG (662 aa).

An a; substrate-binding region spans residues 1–352 (MSKQTLSFQA…SADLPLNVSR (352 aa)). The interval 353–594 (ELLQESRDVR…GDGMSTQLAR (242 aa)) is b. Positions 382-402 (HDRHDSPAPQPAEGADRVSDV) are disordered. Residues 595–662 (LLKQAGQQAP…YVKRVNALLV (68 aa)) are c.

This sequence belongs to the heat shock protein 90 family. Homodimer.

The protein localises to the cytoplasm. Molecular chaperone. Has ATPase activity. This Verminephrobacter eiseniae (strain EF01-2) protein is Chaperone protein HtpG.